The sequence spans 344 residues: S-adenosylmethionine:tRNA ribosyltransferase-isomerase (344 aa).

The protein belongs to the QueA family. As to quaternary structure, monomer.

Its subcellular location is the cytoplasm. It carries out the reaction 7-aminomethyl-7-carbaguanosine(34) in tRNA + S-adenosyl-L-methionine = epoxyqueuosine(34) in tRNA + adenine + L-methionine + 2 H(+). It functions in the pathway tRNA modification; tRNA-queuosine biosynthesis. In terms of biological role, transfers and isomerizes the ribose moiety from AdoMet to the 7-aminomethyl group of 7-deazaguanine (preQ1-tRNA) to give epoxyqueuosine (oQ-tRNA). The chain is S-adenosylmethionine:tRNA ribosyltransferase-isomerase from Levilactobacillus brevis (strain ATCC 367 / BCRC 12310 / CIP 105137 / JCM 1170 / LMG 11437 / NCIMB 947 / NCTC 947) (Lactobacillus brevis).